Here is a 542-residue protein sequence, read N- to C-terminus: Carboxypeptidase Y homolog A (542 aa).

A signal peptide spans 1–17 (MRVLPATLLVGAASAAV). The propeptide occupies 18-123 (PPLQQVLGRP…KLEAYDLRIK (106 aa)). Disulfide bonds link Cys178/Cys418, Cys312/Cys326, Cys336/Cys359, Cys343/Cys352, and Cys381/Cys388. Residue Asn209 is glycosylated (N-linked (GlcNAc...) asparagine). The active site involves Ser265. Asp457 is an active-site residue. A glycan (N-linked (GlcNAc...) asparagine) is linked at Asn508. His519 is an active-site residue.

This sequence belongs to the peptidase S10 family.

It localises to the vacuole. The enzyme catalyses Release of a C-terminal amino acid with broad specificity.. Its function is as follows. Vacuolar carboxypeptidase involved in degradation of small peptides. Digests preferentially peptides containing an aliphatic or hydrophobic residue in P1' position, as well as methionine, leucine or phenylalanine in P1 position of ester substrate. The polypeptide is Carboxypeptidase Y homolog A (cpyA) (Aspergillus oryzae (strain ATCC 42149 / RIB 40) (Yellow koji mold)).